The following is a 286-amino-acid chain: ATP synthase gamma chain (286 aa).

Belongs to the ATPase gamma chain family. As to quaternary structure, F-type ATPases have 2 components, CF(1) - the catalytic core - and CF(0) - the membrane proton channel. CF(1) has five subunits: alpha(3), beta(3), gamma(1), delta(1), epsilon(1). CF(0) has three main subunits: a, b and c.

The protein localises to the cell inner membrane. Produces ATP from ADP in the presence of a proton gradient across the membrane. The gamma chain is believed to be important in regulating ATPase activity and the flow of protons through the CF(0) complex. In Pseudomonas putida (strain GB-1), this protein is ATP synthase gamma chain.